Reading from the N-terminus, the 131-residue chain is Profilin LP04 (131 aa).

Belongs to the profilin family. In terms of assembly, occurs in many kinds of cells as a complex with monomeric actin in a 1:1 ratio.

Its subcellular location is the cytoplasm. The protein resides in the cytoskeleton. Functionally, binds to actin and affects the structure of the cytoskeleton. At high concentrations, profilin prevents the polymerization of actin, whereas it enhances it at low concentrations. By binding to PIP2, it inhibits the formation of IP3 and DG. The sequence is that of Profilin LP04 from Oryza sativa subsp. indica (Rice).